Here is a 90-residue protein sequence, read N- to C-terminus: DNA-binding protein HU-alpha (90 aa).

This sequence belongs to the bacterial histone-like protein family. Heterodimer of an alpha and a beta chain.

In terms of biological role, histone-like DNA-binding protein which is capable of wrapping DNA to stabilize it, and thus to prevent its denaturation under extreme environmental conditions. In Salmonella typhi, this protein is DNA-binding protein HU-alpha (hupA).